A 380-amino-acid chain; its full sequence is Cytochrome b (380 aa).

A run of 4 helical transmembrane segments spans residues 33–53 (FGSL…FLAM), 77–98 (WMIR…FLHI), 113–133 (WNIG…GYVL), and 178–198 (FFTL…LHLL). The heme b site is built by His83 and His97. 2 residues coordinate heme b: His182 and His196. His201 contributes to the a ubiquinone binding site. The next 4 helical transmembrane spans lie at 226-246 (IKDI…TLLS), 288-308 (LGGV…PALH), 320-340 (LSQF…WIGG), and 347-367 (FITI…LLMP).

It belongs to the cytochrome b family. In terms of assembly, the cytochrome bc1 complex contains 11 subunits: 3 respiratory subunits (MT-CYB, CYC1 and UQCRFS1), 2 core proteins (UQCRC1 and UQCRC2) and 6 low-molecular weight proteins (UQCRH/QCR6, UQCRB/QCR7, UQCRQ/QCR8, UQCR10/QCR9, UQCR11/QCR10 and a cleavage product of UQCRFS1). This cytochrome bc1 complex then forms a dimer. The cofactor is heme b.

The protein localises to the mitochondrion inner membrane. In terms of biological role, component of the ubiquinol-cytochrome c reductase complex (complex III or cytochrome b-c1 complex) that is part of the mitochondrial respiratory chain. The b-c1 complex mediates electron transfer from ubiquinol to cytochrome c. Contributes to the generation of a proton gradient across the mitochondrial membrane that is then used for ATP synthesis. This is Cytochrome b (MT-CYB) from Pongo pygmaeus (Bornean orangutan).